The primary structure comprises 103 residues: N(4)-acetylcytidine amidohydrolase (103 aa).

Residues 6–94 enclose the ASCH domain; it reads ITFFQRFQND…IAEIYPNQTQ (89 aa). Catalysis depends on K21, which acts as the Proton acceptor. T24 acts as the Nucleophile in catalysis. E74 serves as the catalytic Proton donor.

This sequence belongs to the N(4)-acetylcytidine amidohydrolase family.

It catalyses the reaction N(4)-acetylcytidine + H2O = cytidine + acetate + H(+). The enzyme catalyses N(4)-acetyl-2'-deoxycytidine + H2O = 2'-deoxycytidine + acetate + H(+). The catalysed reaction is N(4)-acetylcytosine + H2O = cytosine + acetate + H(+). Its function is as follows. Catalyzes the hydrolysis of N(4)-acetylcytidine (ac4C). This Salmonella typhi protein is N(4)-acetylcytidine amidohydrolase (yqfB).